The sequence spans 159 residues: MPKFYCDYCDTYLTHDSPSVRKTHCSGRKHKENVKDYYQKWMEEQAQSLIDKTTAAFQQGKIPPTPFAAPPAGSAMIPPPPSLGGPPRPGMMPAPPMAGPPMMPMMGPPPPGMMPVGHGPGMRPPMGAHMPMMPGPPMMRPPTRPMMLQSRPGMARPDR.

The segment at 4-36 adopts a Matrin-type zinc-finger fold; sequence FYCDYCDTYLTHDSPSVRKTHCSGRKHKENVKD. 2 disordered regions span residues 63-95 and 139-159; these read PPTPFAAPPAGSAMIPPPPSLGGPPRPGMMPAP and MRPPTRPMMLQSRPGMARPDR. Positions 77–95 are enriched in pro residues; it reads IPPPPSLGGPPRPGMMPAP.

The protein belongs to the U1 small nuclear ribonucleoprotein C family. As to quaternary structure, component of the U1 snRNP. The U1 snRNP is composed of the U1 snRNA and the 7 core Sm proteins snrpb, snrpd1, snrpd2, snrpd3, snrpe, snrpf and snrpg that assemble in a heptameric protein ring on the Sm site of the small nuclear RNA to form the core snRNP, and at least 3 U1 snRNP-specific proteins snrnp70/U1-70K, snrpa/U1-A and snrpc/U1-C. snrpc/U1-C interacts with U1 snRNA and the 5' splice-site region of the pre-mRNA.

It is found in the nucleus. In terms of biological role, component of the spliceosomal U1 snRNP, which is essential for recognition of the pre-mRNA 5' splice-site and the subsequent assembly of the spliceosome. SNRPC/U1-C is directly involved in initial 5' splice-site recognition for both constitutive and regulated alternative splicing. The interaction with the 5' splice-site seems to precede base-pairing between the pre-mRNA and the U1 snRNA. Stimulates commitment or early (E) complex formation by stabilizing the base pairing of the 5' end of the U1 snRNA and the 5' splice-site region. The protein is U1 small nuclear ribonucleoprotein C of Xenopus laevis (African clawed frog).